We begin with the raw amino-acid sequence, 500 residues long: Zinc finger protein ENHYDROUS (500 aa).

Residues 1 to 42 (MPVDLDNSSTVSGDASVSSTGNQNLTPKSVGKKKRNLPGMPD) are disordered. The span at 8–21 (SSTVSGDASVSSTG) shows a compositional bias: low complexity. Position 51 is a phosphoserine (Ser-51). 2 C2H2-type zinc fingers span residues 61–83 (FVCEICNKGFQRDQNLQLHRRGH) and 102–132 (YVCPVSGCVHHDPSRALGDLTGIKKHFCRKH). The Nuclear localization signal motif lies at 124–131 (IKKHFCRK). Residues 137–160 (WKCEKCSKKYAVQSDWKAHSKICG) form a C2H2-type 2; degenerate zinc finger. Residues Cys-139, Cys-142, His-155, Cys-159, Cys-166, Cys-168, His-181, and Cys-185 each contribute to the Zn(2+) site. A CCHC-type 2; atypical zinc finger spans residues 164–187 (YKCDCGTLFSRRDSFITHRAFCDA). An SHR-binding region spans residues 174-186 (RRDSFITHRAFCD). Residues 196–236 (HTQSKKLYPETVTRKNPEIEQKSPAAVESSPSLPPSSPPSV) are disordered. Basic and acidic residues predominate over residues 207–216 (VTRKNPEIEQ).

As to quaternary structure, interacts with the DELLA proteins (e.g. GAI/RGA2, RGA, RGL1, RGL2 and RGLG3), acting as coactivators. At 3 days post anthesis (DPA), expressed in the chalazal endosperm region. By 6 DPA, expressed in the endosperm and embryo. In fully germinated seed, strongest expression in the root tip and not detected in the cotyledons. In 4-days old seedlings, restricted to the vasculature of the cotyledons, the shoot apical meristem region, and the root tip. By 8 days, restricted to newly emerged leaves.

It is found in the nucleus. Transcription factor promoting the transition to germination by regulating light and hormonal signaling during seed maturation. Acts as a positive regulator of phytochrome and/or gibberellin action. The protein is Zinc finger protein ENHYDROUS of Arabidopsis thaliana (Mouse-ear cress).